The primary structure comprises 83 residues: Putative snRNP Sm-like protein (83 aa).

Residues 9 to 81 (KPMDVLKNAL…VIFVSPSKGD (73 aa)) enclose the Sm domain.

Belongs to the snRNP Sm proteins family.

The polypeptide is Putative snRNP Sm-like protein (Thermoplasma volcanium (strain ATCC 51530 / DSM 4299 / JCM 9571 / NBRC 15438 / GSS1)).